The chain runs to 307 residues: uncharacterized protein (307 aa).

The helical transmembrane segment at 12 to 34 (LLAFLLALIMIGSVFAYMLSGGS) threads the bilayer.

It is found in the membrane. This is an uncharacterized protein from Archaeoglobus fulgidus (strain ATCC 49558 / DSM 4304 / JCM 9628 / NBRC 100126 / VC-16).